Consider the following 84-residue polypeptide: NAD(P)H-quinone oxidoreductase subunit O (84 aa).

It belongs to the complex I NdhO subunit family. As to quaternary structure, NDH-1 can be composed of about 15 different subunits; different subcomplexes with different compositions have been identified which probably have different functions.

The protein resides in the cellular thylakoid membrane. The enzyme catalyses a plastoquinone + NADH + (n+1) H(+)(in) = a plastoquinol + NAD(+) + n H(+)(out). It carries out the reaction a plastoquinone + NADPH + (n+1) H(+)(in) = a plastoquinol + NADP(+) + n H(+)(out). Functionally, NDH-1 shuttles electrons from an unknown electron donor, via FMN and iron-sulfur (Fe-S) centers, to quinones in the respiratory and/or the photosynthetic chain. The immediate electron acceptor for the enzyme in this species is believed to be plastoquinone. Couples the redox reaction to proton translocation, and thus conserves the redox energy in a proton gradient. Cyanobacterial NDH-1 also plays a role in inorganic carbon-concentration. This Synechococcus sp. (strain CC9902) protein is NAD(P)H-quinone oxidoreductase subunit O.